The sequence spans 343 residues: uncharacterized protein (343 aa).

This is an uncharacterized protein from Nostoc sp. (strain PCC 7120 / SAG 25.82 / UTEX 2576).